The primary structure comprises 354 residues: Probable L-ascorbate-6-phosphate lactonase UlaG (354 aa).

The protein belongs to the UlaG family. The cofactor is a divalent metal cation.

The protein resides in the cytoplasm. The catalysed reaction is L-ascorbate 6-phosphate + H2O = 3-dehydro-L-gulonate 6-phosphate. The protein operates within cofactor degradation; L-ascorbate degradation; D-xylulose 5-phosphate from L-ascorbate: step 1/4. Functionally, probably catalyzes the hydrolysis of L-ascorbate-6-P into 3-keto-L-gulonate-6-P. Is essential for L-ascorbate utilization under anaerobic conditions. The protein is Probable L-ascorbate-6-phosphate lactonase UlaG of Escherichia coli (strain SMS-3-5 / SECEC).